The following is a 360-amino-acid chain: Phospho-N-acetylmuramoyl-pentapeptide-transferase (360 aa).

Transmembrane regions (helical) follow at residues 24-44, 69-89, 92-112, 133-153, 158-178, 199-219, 239-259, 263-283, 288-308, and 337-357; these read RAVM…PWTI, GTPT…TLLW, WANP…ALGF, MVWQ…LAAN, ILIV…GFLV, GLAT…AYAS, VVIF…FNAY, VFMG…VAVI, FVLV…MLQV, and QVVV…LSTL.

The protein belongs to the glycosyltransferase 4 family. MraY subfamily. Requires Mg(2+) as cofactor.

It is found in the cell inner membrane. The catalysed reaction is UDP-N-acetyl-alpha-D-muramoyl-L-alanyl-gamma-D-glutamyl-meso-2,6-diaminopimeloyl-D-alanyl-D-alanine + di-trans,octa-cis-undecaprenyl phosphate = di-trans,octa-cis-undecaprenyl diphospho-N-acetyl-alpha-D-muramoyl-L-alanyl-D-glutamyl-meso-2,6-diaminopimeloyl-D-alanyl-D-alanine + UMP. It functions in the pathway cell wall biogenesis; peptidoglycan biosynthesis. Catalyzes the initial step of the lipid cycle reactions in the biosynthesis of the cell wall peptidoglycan: transfers peptidoglycan precursor phospho-MurNAc-pentapeptide from UDP-MurNAc-pentapeptide onto the lipid carrier undecaprenyl phosphate, yielding undecaprenyl-pyrophosphoryl-MurNAc-pentapeptide, known as lipid I. In Neisseria meningitidis serogroup C / serotype 2a (strain ATCC 700532 / DSM 15464 / FAM18), this protein is Phospho-N-acetylmuramoyl-pentapeptide-transferase.